Reading from the N-terminus, the 184-residue chain is UPF0398 protein BCB4264_A1614 (184 aa).

It belongs to the UPF0398 family.

This Bacillus cereus (strain B4264) protein is UPF0398 protein BCB4264_A1614.